The sequence spans 250 residues: tRNA pseudouridine synthase A (250 aa).

Catalysis depends on D52, which acts as the Nucleophile. Residue Y111 coordinates substrate.

Belongs to the tRNA pseudouridine synthase TruA family. As to quaternary structure, homodimer.

The enzyme catalyses uridine(38/39/40) in tRNA = pseudouridine(38/39/40) in tRNA. In terms of biological role, formation of pseudouridine at positions 38, 39 and 40 in the anticodon stem and loop of transfer RNAs. This chain is tRNA pseudouridine synthase A, found in Methylobacterium sp. (strain 4-46).